The primary structure comprises 499 residues: Glycerol kinase (499 aa).

Threonine 13 is a binding site for ADP. The ATP site is built by threonine 13, threonine 14, and serine 15. Residue threonine 13 participates in sn-glycerol 3-phosphate binding. Arginine 17 provides a ligand contact to ADP. 4 residues coordinate sn-glycerol 3-phosphate: arginine 83, glutamate 84, tyrosine 135, and aspartate 245. Glycerol is bound by residues arginine 83, glutamate 84, tyrosine 135, aspartate 245, and glutamine 246. ADP is bound by residues threonine 267 and glycine 310. ATP-binding residues include threonine 267, glycine 310, glutamine 314, and glycine 411. ADP-binding residues include glycine 411 and asparagine 415.

This sequence belongs to the FGGY kinase family.

It carries out the reaction glycerol + ATP = sn-glycerol 3-phosphate + ADP + H(+). The protein operates within polyol metabolism; glycerol degradation via glycerol kinase pathway; sn-glycerol 3-phosphate from glycerol: step 1/1. Its activity is regulated as follows. Inhibited by fructose 1,6-bisphosphate (FBP). Key enzyme in the regulation of glycerol uptake and metabolism. Catalyzes the phosphorylation of glycerol to yield sn-glycerol 3-phosphate. This is Glycerol kinase from Xanthomonas euvesicatoria pv. vesicatoria (strain 85-10) (Xanthomonas campestris pv. vesicatoria).